The primary structure comprises 330 residues: Aspartate--ammonia ligase (330 aa).

The protein belongs to the class-II aminoacyl-tRNA synthetase family. AsnA subfamily.

The protein localises to the cytoplasm. The catalysed reaction is L-aspartate + NH4(+) + ATP = L-asparagine + AMP + diphosphate + H(+). Its pathway is amino-acid biosynthesis; L-asparagine biosynthesis; L-asparagine from L-aspartate (ammonia route): step 1/1. This Haemophilus influenzae (strain ATCC 51907 / DSM 11121 / KW20 / Rd) protein is Aspartate--ammonia ligase.